Here is a 497-residue protein sequence, read N- to C-terminus: Sperm motility kinase Z (497 aa).

In terms of domain architecture, Protein kinase spans 28–275; that stretch reads YTVLKTLSQH…AQDLLSHPWL (248 aa). ATP contacts are provided by residues 34-42 and lysine 57; that span reads LSQHGTTEV. The active-site Proton acceptor is the aspartate 146. The 41-residue stretch at 292–332 folds into the UBA domain; the sequence is FPDPDIMAAMKNIGFHVQDIRESLKHRKFDETMATYNLLRA. 2 disordered regions span residues 383 to 410 and 439 to 460; these read TEEHQLRQTGGTNAPFPPKKTPTMGRSQ and SSQAEKTSSDPEKSETSTSCPL.

This sequence belongs to the protein kinase superfamily. CAMK Ser/Thr protein kinase family. Smok subfamily.

The enzyme catalyses L-seryl-[protein] + ATP = O-phospho-L-seryl-[protein] + ADP + H(+). It catalyses the reaction L-threonyl-[protein] + ATP = O-phospho-L-threonyl-[protein] + ADP + H(+). May play a role in sperm motility, especially in the regulation of flagellar function. The polypeptide is Sperm motility kinase Z (Gm4922) (Mus musculus (Mouse)).